Reading from the N-terminus, the 1239-residue chain is Potassium channel subfamily T member 1 (1239 aa).

Residues 1–45 (MARAKLPRSPSEGKAGPGDTPAGSAAPEEPHGLSPLLPTRGGGSV) are disordered. The Cytoplasmic segment spans residues 1-93 (MARAKLPRSP…LFFIKNQRSS (93 aa)). The chain crosses the membrane as a helical span at residues 94–126 (LRIRLFNFSLKLLTCLLYIVRVLLDNPDQGIGC). The Extracellular segment spans residues 127–153 (WGCTKYNYTFNGSSSEFHWAPILWVER). N-linked (GlcNAc...) asparagine glycans are attached at residues Asn133 and Asn137. A helical membrane pass occupies residues 154–178 (KMALWVIQVIVATISFLETMLLIYL). Residues 179–192 (SYKGNIWEQIFHVS) are Cytoplasmic-facing. A helical membrane pass occupies residues 193–208 (FVLEMINTLPFIITVF). Over 209 to 215 (WPPLRNL) the chain is Extracellular. Residues 216–233 (FIPVFLNCWLAKHALENM) traverse the membrane as a helical segment. Residues 234-246 (INDFHRAILRTQS) lie on the Cytoplasmic side of the membrane. The helical transmembrane segment at 247–274 (AMFNQVLILFCTLLCLVFTGTCGIQHLE) threads the bilayer. Residues 275 to 281 (RAGGNLN) are Extracellular-facing. An intramembrane region (pore-forming) is located at residues 282–302 (LLTSFYFCIVTFSTVGFGDVT). 2 residues coordinate K(+): Val296 and Gly297. Topologically, residues 303 to 304 (PK) are extracellular. A helical membrane pass occupies residues 305–338 (IWPSQLLVVILICVTLVVLPLQFEELVYLWMERQ). Over 339–1239 (KSGGNYSRHR…NPETRDETQL (901 aa)) the chain is Cytoplasmic. One can recognise an RCK N-terminal 1 domain in the interval 352 to 488 (EKHVVLCVSS…FHVKFADHVV (137 aa)). The Na(+) site is built by Leu513, His516, Ser538, and Asn540. The segment at 658–689 (QNTDCRPSQGGSGGGGGKLTLPTENGSGSRRP) is disordered. Residues Cys758 and Cys759 each contribute to the Zn(2+) site. K(+) is bound by residues Arg761 and Lys764. Residues Arg761 and Lys764 each contribute to the Na(+) site. Residues Cys766 and His768 each coordinate Zn(2+). 4 residues coordinate K(+): Asn769, Tyr771, Tyr777, and Gly778. Tyr771 contacts Na(+). Phe779 lines the Na(+) pocket. Residues 781–921 (NKLIIVSAET…QFRAKDSYSL (141 aa)) enclose the RCK N-terminal 2 domain. Residues Ser787, Leu818, Asp820, Gly842, and Asp865 each coordinate K(+). 2 disordered regions span residues 1053-1081 (REAKGPWGTRAASGGGSTHGRHGGSADPV) and 1212-1239 (TSSSQSRKSSCSNKLSSCNPETRDETQL). The segment covering 1213 to 1230 (SSSQSRKSSCSNKLSSCN) has biased composition (low complexity).

Belongs to the potassium channel family. Calcium-activated (TC 1.A.1.3) subfamily. KCa4.1/KCNT1 sub-subfamily. Homotetramer; which constitutes the Na(+)-activated K(+) channel. Interacts with KCNT2; these heterodimer channels differ from the homomers in their unitary conductance, kinetic behavior, subcellular localization, and response to activation of protein kinase C. Interacts (via C-terminus) with FMR1; this interaction alters gating properties of KCNT1. Interacts with CRBN via its cytoplasmic C-terminus. In terms of assembly, does not interact with KCNT2. Post-translationally, phosphorylated by protein kinase C. Phosphorylation of the C-terminal domain increases channel activity. Detected in brain and brainstem, in vestibular and oculomotor nuclei, the medial nucleus of the trapezoid in the auditory system, in olfactory bulb, red nucleus, and deep cerebellar nuclei. Detected in thalamus, substantia nigra, and amygdala (at protein level). Highly expressed in the brain and kidney.

The protein localises to the cell membrane. The catalysed reaction is K(+)(in) = K(+)(out). With respect to regulation, activated by high intracellular Na(+) level. In addition to activation by Na(+), is cooperatively activated by intracellular Cl(-) levels. Activated upon stimulation of G-protein coupled receptors, such as CHRM1 and GRIA1. Sodium-activated K(+) channel. Acts as an important mediator of neuronal membrane excitability. Contributes to the delayed outward currents. Regulates neuronal bursting in sensory neurons. Contributes to synaptic development and plasticity. The polypeptide is Potassium channel subfamily T member 1 (Kcnt1) (Rattus norvegicus (Rat)).